Here is a 1065-residue protein sequence, read N- to C-terminus: MRKQEVRTGREAGQGHGTGSPAEQVKALMDLLAGKGSQGSQAPQALDRTPDAPLGPCSNDSRIQRHRKALLSKVGGGPELGGPWHRLASLLLVEGLTDLQLREHDFTQVEATRGGGHPARTVALDRLFLPLSRVSVPPRVSITIGVAGMGKTTLVRHFVRLWAHGQVGKDFSLVLPLTFRDLNTHEKLCADRLICSVFPHVGEPSLAVAVPARALLILDGLDECRTPLDFSNTVACTDPKKEIPVDHLITNIIRGNLFPEVSIWITSRPSASGQIPGGLVDRMTEIRGFNEEEIKVCLEQMFPEDQALLGWMLSQVQADRALYLMCTVPAFCRLTGMALGHLWRSRTGPQDAELWPPRTLCELYSWYFRMALSGEGQEKGKASPRIEQVAHGGRKMVGTLGRLAFHGLLKKKYVFYEQDMKAFGVDLALLQGAPCSCFLQREETLASSVAYCFTHLSLQEFVAAAYYYGASRRAIFDLFTESGVSWPRLGFLTHFRSAAQRAMQAEDGRLDVFLRFLSGLLSPRVNALLAGSLLAQGEHQAYRTQVAELLQGCLRPDAAVCARAINVLHCLHELQHTELARSVEEAMESGALARLTGPAHRAALAYLLQVSDACAQEANLSLSLSQGVLQSLLPQLLYCRKLRLDTNQFQDPVMELLGSVLSGKDCRIQKISLAENQISNKGAKALARSLLVNRSLTSLDLRGNSIGPQGAKALADALKINRTLTSLSLQGNTVRDDGARSMAEALASNRTLSMLHLQKNSIGPMGAQRMADALKQNRSLKELMFSSNSIGDGGAKALAEALKVNQGLESLDLQSNSISDAGVAALMGALCTNQTLLSLSLRENSISPEGAQAIAHALCANSTLKNLDLTANLLHDQGARAIAVAVRENRTLTSLHLQWNFIQAGAAQALGQALQLNRSLTSLDLQENAIGDDGACAVARALKVNTALTALYLQVASIGASGAQVLGEALAVNRTLEILDLRGNAIGVAGAKALANALKVNSSLRRLNLQENSLGMDGAICIATALSGNHRLQHINLQGNHIGDSGARMISEAIKTNAPTCTVEM.

Residues 1–10 are compositionally biased toward basic and acidic residues; it reads MRKQEVRTGR. The tract at residues 1–62 is disordered; the sequence is MRKQEVRTGR…PLGPCSNDSR (62 aa). Residues 139 to 460 form the NACHT domain; that stretch reads RVSITIGVAG…YCFTHLSLQE (322 aa). Residue 145 to 152 participates in ATP binding; sequence GVAGMGKT. The short motif at 457–460 is the TRAF6-binding element; that stretch reads SLQE. LRR repeat units lie at residues 617–639, 641–663, 665–688, 693–716, 721–744, 749–772, 777–800, 805–828, 833–856, 861–884, 889–912, 917–940, 945–968, 973–996, 1001–1029, and 1031–1052; these read EANLSLSLSQGVLQSLLPQLLYC, KLRLDTNQFQDPVMELLGSVLSG, DCRIQKISLAENQISNKGAKALAR, NRSLTSLDLRGNSIGPQGAKALAD, NRTLTSLSLQGNTVRDDGARSMAE, NRTLSMLHLQKNSIGPMGAQRMAD, NRSLKELMFSSNSIGDGGAKALAE, NQGLESLDLQSNSISDAGVAALMG, NQTLLSLSLRENSISPEGAQAIAH, NSTLKNLDLTANLLHDQGARAIAV, NRTLTSLHLQWNFIQAGAAQALGQ, NRSLTSLDLQENAIGDDGACAVAR, NTALTALYLQVASIGASGAQVLGE, NRTLEILDLRGNAIGVAGAKALAN, NSSLRRLNLQENSLGMDGAICIATALSGN, and RLQHINLQGNHIGDSGARMISE.

It belongs to the NLRP family. Directly interacts (via CARD) with TMEM173/STING; this interaction reduces TMEM173 trafficking to the perinuclear region in response to interferon stimulatory DNA. Also interacts, but to a lesser extent, with TBK1. Interacts with TRAF6; this interaction results in decreased TRAF6 'Lys-63'-linked polyubiquitination, but leaves 'Lys-48'-linked chains unchanged, promoting TRAF6 protein degradation. Interacts with PIK3R1/PIK3R2; this interaction disrupts the association between PIK3R1/PIK3R2 and the p110 catalytic subunit PIK3CA/PIK3CB/PIK3CD and reduces PIK3R1/PIK3R2 activation. Weakly interacts with PYCARD/ASC. Interacts with CASP1 and CASP5.

The protein localises to the cytoplasm. Its function is as follows. Negative regulator of the innate immune response. Attenuates signaling pathways activated by Toll-like receptors (TLRs) and the DNA sensor STING/TMEM173 in response to pathogen-associated molecular patterns, such as intracellular poly(dA:dT), but not poly(I:C), or in response to DNA virus infection, including that of Herpes simplex virus 1 (HSV1). May affect TLR4 signaling by acting at the level of TRAF6 ubiquitination, decreasing the activating 'Lys-63'-linked ubiquitination and leaving unchanged the degradative 'Lys-48'-linked ubiquitination. Inhibits the PI3K-AKT-mTOR pathway possibly by directly interacting with the posphatidylinositol 3-kinase regulatory subunit p85 (PIK3R1/PIK3R2) and disrupting the association between PIK3R1/PIK3R2 and the catalytic subunit p110 (PIK3CA/PIK3CB/PIK3CD) and reducing PIK3R1/PIK3R2 activation. Via its regulation of the PI3K-AKT-mTOR pathway, controls cell proliferation, predominantly in intestinal epithelial cells. May also affect NOD1- or NOD2-mediated NF-kappa-B activation. Might also affect the inflammatory response by preventing NLRP3 inflammasome formation, CASP1 cleavage and IL1B maturation. This is NLR family CARD domain-containing protein 3 (NLRC3) from Homo sapiens (Human).